Consider the following 171-residue polypeptide: Co-chaperone protein HscB homolog (171 aa).

The 73-residue stretch at 2–74 folds into the J domain; the sequence is NHFELFGLPP…ISRAEYLLSQ (73 aa).

This sequence belongs to the HscB family. Interacts with HscA and stimulates its ATPase activity.

Functionally, co-chaperone involved in the maturation of iron-sulfur cluster-containing proteins. Seems to help targeting proteins to be folded toward HscA. The sequence is that of Co-chaperone protein HscB homolog from Vibrio vulnificus (strain CMCP6).